Consider the following 381-residue polypeptide: Gustatory and pheromone receptor 39a, isoform C (381 aa).

Over 1–37 the chain is Cytoplasmic; sequence MDFQPGELCAYYRLCRYLGIFCIDYNPTKKKFRLRRS. The chain crosses the membrane as a helical span at residues 38-58; sequence VLCYIVHFALQAYLVGCISVM. Residues 59 to 79 lie on the Extracellular side of the membrane; the sequence is VTYWRRCFKSELTTTGNHFDR. A helical membrane pass occupies residues 80 to 100; the sequence is LVMVIALGILVVQNAWLIWLQ. At 101 to 129 the chain is on the cytoplasmic side; the sequence is APHLRIVRQIEFYRRNHLANVRLLLPKRL. A helical membrane pass occupies residues 130-150; it reads LWLIIATNVVYMANFIKTCIF. The Extracellular portion of the chain corresponds to 151 to 171; that stretch reads EWLTDASRLFVITSLGFPLRY. A helical transmembrane segment spans residues 172 to 192; the sequence is LVTSFTMGTYFCMVHIVRLVL. The Cytoplasmic segment spans residues 193–239; it reads DWNQSQINAIIDESADLKMTSPNRLRLRVCLEMHDRLMLLCNDEISL. Residues 240 to 260 form a helical membrane-spanning segment; sequence VYGFIAWLSWMFASLDVTGVI. At 261-271 the chain is on the extracellular side; it reads YLTMVIQTKKS. Residues 272-292 form a helical membrane-spanning segment; sequence IVLKLITNVVWLSPTFMTCAA. At 293 to 350 the chain is on the cytoplasmic side; it reads SFMSNRVTIQANKTAKMLTKVPRTGTGLDRMIEKFLLKNLRQKPILTAYGFFALDKST. A helical transmembrane segment spans residues 351-371; that stretch reads LFKLFTAIFTYMVILVQFKEM. The Extracellular segment spans residues 372–381; the sequence is ENSTKSINKF. Asn-373 is a glycosylation site (N-linked (GlcNAc...) asparagine).

It belongs to the insect chemoreceptor superfamily. Gustatory receptor (GR) family. Gr21a subfamily. As to expression, expressed in the adult labellar chemosensory neurons. In larvae, is expressed in neurons of the terminal external chemosensory organ, as well as in the dorsal pharyngeal sense organ.

Its subcellular location is the cell membrane. Gustatory receptor which mediates acceptance or avoidance behavior, depending on its substrates. Plays a role in sustaining courtship behavior in males, possibly through the reception of a stimulating arrestant pheromone. This is Gustatory and pheromone receptor 39a, isoform C (Gr39a) from Drosophila melanogaster (Fruit fly).